Consider the following 486-residue polypeptide: MISNGSKSGKNLGAIALAGMVISSMIGGGIFSLPQNMAASAGVGAIILAWILTGVGMFFIANTFKILSLVRPDLTTGIYMYSREGFGPYIGFTIGWGYWLCQIFGNVGYAVMTMDALNYFFPPYFQGGNTLPAILGGSILIWVFNFIVLKGIRQASFINIIGTVGKLVPLIVFIIITAFLFKLAIFKTDFWGDTVTKTQPLLGSMTSQLKSTMLVTLWAFIGIEGAVVMSARAKSPSAVGKATILGFTGCLTVYILLSILPFGSLFQHQLAGIANPSTAGVLDILVGKWGEILMNVGLLIAVLSSWLSWTMIVAEIPYSAAKNGTFPEIFAIENAHRSPKVSLYVTSALMQIAMLLVYFSTDAWNTMLSITGVMVLPAYFASAAFLVKFSKNKKYPNKGPIKAFTAKITGLLGAVYSIWLIYAGGLKYLLMAIILLALGIPFYIDAGKKGRNAKTFFAKKEVTEITIIAFLALLAIFLFSTEKIRL.

A run of 12 helical transmembrane segments spans residues 12 to 32 (LGAI…GIFS), 41 to 61 (AGVG…FFIA), 85 to 105 (GFGP…QIFG), 132 to 152 (PAIL…LKGI), 160 to 180 (IIGT…TAFL), 211 to 231 (STML…VMSA), 242 to 262 (ATIL…ILPF), 296 to 316 (VGLL…VAEI), 341 to 361 (VSLY…YFST), 367 to 387 (MLSI…AFLV), 418 to 438 (IWLI…LLAL), and 461 to 481 (EVTE…LFST).

This sequence belongs to the amino acid-polyamine-organocation (APC) superfamily. Basic amino acid/polyamine antiporter (APA) (TC 2.A.3.2) family.

It is found in the cell inner membrane. Catalyzes the exchange of L-arginine for agmatine. The arginine uptake by the bacterium in the macrophage may be a virulence factor against the host innate immune response. This is Arginine/agmatine antiporter (aaxC) from Chlamydia abortus (strain DSM 27085 / S26/3) (Chlamydophila abortus).